We begin with the raw amino-acid sequence, 940 residues long: Coatomer subunit beta (940 aa).

HEAT repeat units lie at residues 11–48 (FLEAPSVDALKTSLESKNDYVKISAMKTILRVVINGDS), 90–125 (QEMILACNSFRNDLQHPNEFIRGATLRFLCKLKEPE), 126–162 (LLDPLIPTVRQCLEHRHAYVRKNAILAVFSIYQVSNH), and 310–347 (SILEDLITDVIPFLSSSDFDVCEKAISIIMGLVSSRNV).

Oligomeric complex that consists of at least the alpha, beta, beta', gamma, delta, epsilon and zeta subunits.

It is found in the cytoplasm. Its subcellular location is the golgi apparatus membrane. The protein localises to the cytoplasmic vesicle. The protein resides in the COPI-coated vesicle membrane. Its function is as follows. The coatomer is a cytosolic protein complex that binds to dilysine motifs and reversibly associates with Golgi non-clathrin-coated vesicles, which further mediate biosynthetic protein transport from the ER, via the Golgi up to the trans Golgi network. Coatomer complex is required for budding from Golgi membranes, and is essential for the retrograde Golgi-to-ER transport of dilysine-tagged proteins. This is Coatomer subunit beta (sec26) from Schizosaccharomyces pombe (strain 972 / ATCC 24843) (Fission yeast).